A 118-amino-acid polypeptide reads, in one-letter code: NTVSSFQDILMRMSKMQLGTSSEDLNGMITQLESLKLYRDSLGEAVMRVGDLHSLQSRNGKWREQLSQKFEEIRWLIEEVRHKLKITENSFEQITFMQALQLLLEVEQEIRTFSFQLI.

Short sequence motifs (nuclear export signal) lie at residues 9 to 18 (ILMRMSKMQL) and 82 to 91 (HKLKITENSF).

The protein belongs to the influenza viruses NEP family. In terms of assembly, binds M1 protein. May interact with human nucleoporin RAB/HRB and exportin XPO1/CRM1.

Its subcellular location is the virion. The protein resides in the host nucleus. Mediates the nuclear export of encapsidated genomic RNAs (ribonucleoproteins, RNPs). Acts as an adapter between viral RNPs complexes and the nuclear export machinery of the cell. Possesses no intrinsic RNA-binding activity, but includes a C-terminal M1-binding domain. This domain is believed to allow recognition of RNPs to which the M1 protein is bound. Because the M1 protein is not available in large quantities until the later stages of infection, such an indirect recognition mechanism probably ensures that genomic RNPs are not exported from the nucleus before sufficient quantities of viral mRNA and progeny genomic RNA have been synthesized. Furthermore, the RNPs enters the cytoplasm only when they have associated with the M1 protein that is necessary to guide them to the plasma membrane. May down-regulate viral RNA synthesis when overproduced. This is Nuclear export protein (NS) from Influenza A virus (strain A/Chicken/Japan/1924 H7N7).